A 445-amino-acid chain; its full sequence is FAS-associated factor 2-A (445 aa).

The UBA domain maps to 12-53; sequence EQTEKLLQFQDLTGIESMDQCRQTLQQHNWNIEAAVQDRLNE. Positions 275-353 form a coiled coil; the sequence is SERLEREERN…ERKSECLPAE (79 aa). The disordered stretch occupies residues 302–354; that stretch reads RADQEKERKKKEKQEQKRREEEEAQRKQMLEERKKRNLEEEKERKSECLPAEP. The span at 303 to 348 shows a compositional bias: basic and acidic residues; sequence ADQEKERKKKEKQEQKRREEEEAQRKQMLEERKKRNLEEEKERKSE. In terms of domain architecture, UBX spans 357-439; that stretch reads DHPDNVKIIF…GLSQSQLLFV (83 aa).

Its subcellular location is the cytoplasm. It is found in the lipid droplet. It localises to the endoplasmic reticulum. In terms of biological role, plays an important role in endoplasmic reticulum-associated degradation (ERAD) that mediates ubiquitin-dependent degradation of misfolded endoplasmic reticulum proteins. Involved in inhibition of lipid droplet degradation. Involved in stress granule disassembly. The chain is FAS-associated factor 2-A (faf2-a) from Xenopus laevis (African clawed frog).